Consider the following 740-residue polypeptide: Ion-translocating oxidoreductase complex subunit C (740 aa).

2 4Fe-4S ferredoxin-type domains span residues 369–397 and 407–436; these read GEPQ…QQLY and KATT…VQYF. [4Fe-4S] cluster-binding residues include cysteine 377, cysteine 380, cysteine 383, cysteine 387, cysteine 416, cysteine 419, cysteine 422, and cysteine 426. The interval 602-716 is disordered; sequence KLEQQQANAE…EPEEQVDPRK (115 aa).

Belongs to the 4Fe4S bacterial-type ferredoxin family. RnfC subfamily. In terms of assembly, the complex is composed of six subunits: RsxA, RsxB, RsxC, RsxD, RsxE and RsxG. It depends on [4Fe-4S] cluster as a cofactor.

It is found in the cell inner membrane. Its function is as follows. Part of a membrane-bound complex that couples electron transfer with translocation of ions across the membrane. Required to maintain the reduced state of SoxR. This Escherichia coli (strain SE11) protein is Ion-translocating oxidoreductase complex subunit C.